Consider the following 160-residue polypeptide: MTKKKAYKPGSATIAMNKRARHDYFIEEEFEAGLSLQGWEVKSLRAGKANISESYILLQNGEAFLFGATFTPLNVASSHVVCDPTRTRKLLLKERELASLFGSANRDGYTIVPLSLYWKNAWAKLKIGVAKGKKEHDKRDDIKTREWKQDKARIMKNANR.

Basic and acidic residues predominate over residues 137–153 (DKRDDIKTREWKQDKAR). A disordered region spans residues 137–160 (DKRDDIKTREWKQDKARIMKNANR).

It belongs to the SmpB family.

Its subcellular location is the cytoplasm. In terms of biological role, required for rescue of stalled ribosomes mediated by trans-translation. Binds to transfer-messenger RNA (tmRNA), required for stable association of tmRNA with ribosomes. tmRNA and SmpB together mimic tRNA shape, replacing the anticodon stem-loop with SmpB. tmRNA is encoded by the ssrA gene; the 2 termini fold to resemble tRNA(Ala) and it encodes a 'tag peptide', a short internal open reading frame. During trans-translation Ala-aminoacylated tmRNA acts like a tRNA, entering the A-site of stalled ribosomes, displacing the stalled mRNA. The ribosome then switches to translate the ORF on the tmRNA; the nascent peptide is terminated with the 'tag peptide' encoded by the tmRNA and targeted for degradation. The ribosome is freed to recommence translation, which seems to be the essential function of trans-translation. The sequence is that of SsrA-binding protein from Edwardsiella ictaluri (strain 93-146).